We begin with the raw amino-acid sequence, 190 residues long: Elongation factor P 1 (190 aa).

It belongs to the elongation factor P family.

Its subcellular location is the cytoplasm. Its pathway is protein biosynthesis; polypeptide chain elongation. Its function is as follows. Involved in peptide bond synthesis. Stimulates efficient translation and peptide-bond synthesis on native or reconstituted 70S ribosomes in vitro. Probably functions indirectly by altering the affinity of the ribosome for aminoacyl-tRNA, thus increasing their reactivity as acceptors for peptidyl transferase. This is Elongation factor P 1 (efp1) from Lactobacillus johnsonii (strain CNCM I-12250 / La1 / NCC 533).